We begin with the raw amino-acid sequence, 97 residues long: Aspartyl/glutamyl-tRNA(Asn/Gln) amidotransferase subunit C (97 aa).

The protein belongs to the GatC family. Heterotrimer of A, B and C subunits.

The enzyme catalyses L-glutamyl-tRNA(Gln) + L-glutamine + ATP + H2O = L-glutaminyl-tRNA(Gln) + L-glutamate + ADP + phosphate + H(+). It catalyses the reaction L-aspartyl-tRNA(Asn) + L-glutamine + ATP + H2O = L-asparaginyl-tRNA(Asn) + L-glutamate + ADP + phosphate + 2 H(+). In terms of biological role, allows the formation of correctly charged Asn-tRNA(Asn) or Gln-tRNA(Gln) through the transamidation of misacylated Asp-tRNA(Asn) or Glu-tRNA(Gln) in organisms which lack either or both of asparaginyl-tRNA or glutaminyl-tRNA synthetases. The reaction takes place in the presence of glutamine and ATP through an activated phospho-Asp-tRNA(Asn) or phospho-Glu-tRNA(Gln). The protein is Aspartyl/glutamyl-tRNA(Asn/Gln) amidotransferase subunit C of Prochlorococcus marinus (strain MIT 9303).